A 181-amino-acid chain; its full sequence is MNKSLKEIYYQDVIPGLIEQFNYTNIHQVLKITKITLNRGLGEASKNNKILEASIKEFELISGQHPLINKARKSVAGFKIREGMPVGISVTLRKKLMYTFLEKLIHLSLPRIRDFRGVSVKSFDGRGNYNLGIKEQLIFPEIEYDQVDQVRGLDISITTTAKTQQEGIALLRALGMPFNDN.

The protein belongs to the universal ribosomal protein uL5 family. Part of the 50S ribosomal subunit; contacts the 5S rRNA.

It localises to the plastid. The protein resides in the chloroplast. Functionally, binds 5S rRNA, forms part of the central protuberance of the 50S subunit. This chain is Large ribosomal subunit protein uL5c (rpl5), found in Guillardia theta (Cryptophyte).